The sequence spans 638 residues: Eukaryotic translation initiation factor 2A (638 aa).

WD repeat units lie at residues 287–329 (SKEG…FDFG) and 331–370 (GPRN…KLAN). The segment covering 441–450 (KITKAKHEGI) has biased composition (basic and acidic residues). Residues 441–593 (KITKAKHEGI…SDKERKIRSV (153 aa)) are disordered. A Phosphothreonine modification is found at Thr463. Residues 492–501 (AAAGGVNGNK) show a composition bias toward low complexity. The segment covering 583–593 (ISDKERKIRSV) has biased composition (basic and acidic residues).

Belongs to the WD repeat EIF2A family.

Functionally, functions in the early steps of protein synthesis of a small number of specific mRNAs. Acts by directing the binding of methionyl-tRNAi to 40S ribosomal subunits. In contrast to the eIF-2 complex, it binds methionyl-tRNAi to 40S subunits in a codon-dependent manner, whereas the eIF-2 complex binds methionyl-tRNAi to 40S subunits in a GTP-dependent manner. The sequence is that of Eukaryotic translation initiation factor 2A from Drosophila melanogaster (Fruit fly).